The following is a 115-amino-acid chain: NADH-ubiquinone oxidoreductase chain 3 (115 aa).

3 helical membrane passes run 3–23, 55–75, and 86–106; these read LILT…IAFW, FFLV…LLPL, and TMLT…AYEW.

The protein belongs to the complex I subunit 3 family. As to quaternary structure, core subunit of respiratory chain NADH dehydrogenase (Complex I) which is composed of 45 different subunits. Interacts with TMEM186. Interacts with TMEM242.

It is found in the mitochondrion inner membrane. The enzyme catalyses a ubiquinone + NADH + 5 H(+)(in) = a ubiquinol + NAD(+) + 4 H(+)(out). Core subunit of the mitochondrial membrane respiratory chain NADH dehydrogenase (Complex I) which catalyzes electron transfer from NADH through the respiratory chain, using ubiquinone as an electron acceptor. Essential for the catalytic activity of complex I. The protein is NADH-ubiquinone oxidoreductase chain 3 of Rhinoceros unicornis (Greater Indian rhinoceros).